Consider the following 285-residue polypeptide: Methyl-CpG-binding domain protein 3 (285 aa).

The region spanning 1–69 (MERKRWECPA…STFDFRTGKM (69 aa)) is the MBD domain. Serine 56 bears the Phosphoserine mark. Lysine 73 participates in a covalent cross-link: Glycyl lysine isopeptide (Lys-Gly) (interchain with G-Cter in SUMO2). Serine 85 bears the Phosphoserine mark. Glycyl lysine isopeptide (Lys-Gly) (interchain with G-Cter in SUMO2) cross-links involve residues lysine 90 and lysine 92. Phosphoserine is present on serine 144. A coiled-coil region spans residues 221-279 (TDDDIRKQEELVQQVRKRLEEALMADMLAHVEELARDGEAPLDKACAEEEEEEEEEEEE). Residues 255 to 267 (ARDGEAPLDKACA) are compositionally biased toward basic and acidic residues. Residues 255 to 285 (ARDGEAPLDKACAEEEEEEEEEEEEPEPERV) are disordered. Over residues 268–285 (EEEEEEEEEEEEPEPERV) the composition is skewed to acidic residues.

As to quaternary structure, heterodimer (via N-terminus) with MBD2. Component of the MeCP1 histone deacetylase complex. Component of the nucleosome remodeling and deacetylase (NuRD) repressor complex, composed of core proteins MTA1, MTA2, MTA3, RBBP4, RBBP7, HDAC1, HDAC2, MBD2, MBD3, and peripherally associated proteins CDK2AP1, CDK2AP2, GATAD2A, GATAD2B, CHD3, CHD4 and CHD5. The exact stoichiometry of the NuRD complex is unknown, and some subunits such as MBD2 and MBD3, GATAD2A and GATAD2B, and CHD3, CHD4 and CHD5 define mutually exclusive NuRD complexes. Interacts with MBD3L2 (via N-terminus); the interaction is direct. Interacts with BCL6. Interacts with CDK2AP1. Interacts with HDAC1. Interacts with MTA2. Interacts with DNMT1. Interacts with GATAD2A. Interacts with GATAD2B. Does not interact with PWWP2A. Does not interact with PWWP2B. Highly expressed in brain, heart, kidney, liver, lung, skeletal muscle, spleen and testis. Detected at lower levels in embryonic stem cells.

The protein resides in the nucleus. The protein localises to the chromosome. In terms of biological role, acts as a component of the histone deacetylase NuRD complex which participates in the remodeling of chromatin. Acts as transcriptional repressor and plays a role in gene silencing. Does not bind methylated DNA by itself. Binds to a lesser degree DNA containing unmethylated CpG dinucleotides. Recruits histone deacetylases and DNA methyltransferases. The protein is Methyl-CpG-binding domain protein 3 (Mbd3) of Mus musculus (Mouse).